The primary structure comprises 142 residues: Large ribosomal subunit protein uL16 (142 aa).

The protein belongs to the universal ribosomal protein uL16 family. In terms of assembly, part of the 50S ribosomal subunit.

Functionally, binds 23S rRNA and is also seen to make contacts with the A and possibly P site tRNAs. The chain is Large ribosomal subunit protein uL16 from Thermosipho melanesiensis (strain DSM 12029 / CIP 104789 / BI429).